A 270-amino-acid chain; its full sequence is Protoheme IX farnesyltransferase (270 aa).

The next 7 helical transmembrane spans lie at 13-30 (LALL…LVPD), 33-53 (HATL…GSAL), 95-115 (LLVL…ALAW), 129-149 (LALA…WTLA), 156-176 (YRII…FWLF), 207-227 (LWLG…LMAP), and 249-269 (EATL…ALLL).

Belongs to the UbiA prenyltransferase family. Protoheme IX farnesyltransferase subfamily.

Its subcellular location is the cell inner membrane. The catalysed reaction is heme b + (2E,6E)-farnesyl diphosphate + H2O = Fe(II)-heme o + diphosphate. It functions in the pathway porphyrin-containing compound metabolism; heme O biosynthesis; heme O from protoheme: step 1/1. Functionally, converts heme B (protoheme IX) to heme O by substitution of the vinyl group on carbon 2 of heme B porphyrin ring with a hydroxyethyl farnesyl side group. The sequence is that of Protoheme IX farnesyltransferase from Geobacter sulfurreducens (strain ATCC 51573 / DSM 12127 / PCA).